An 852-amino-acid polypeptide reads, in one-letter code: Aconitate hydratase B (852 aa).

Residues Arg194, 237–239, 405–407, and Ser489 contribute to the substrate site; these read SSR and QDT. [4Fe-4S] cluster-binding residues include Cys708, Cys766, and Cys769. Substrate-binding residues include Arg788 and Arg793.

Belongs to the aconitase/IPM isomerase family. As to quaternary structure, monomer. [4Fe-4S] cluster serves as cofactor.

The enzyme catalyses citrate = D-threo-isocitrate. The catalysed reaction is (2S,3R)-3-hydroxybutane-1,2,3-tricarboxylate = 2-methyl-cis-aconitate + H2O. It participates in carbohydrate metabolism; tricarboxylic acid cycle; isocitrate from oxaloacetate: step 2/2. Its pathway is organic acid metabolism; propanoate degradation. Involved in the catabolism of short chain fatty acids (SCFA) via the tricarboxylic acid (TCA)(acetyl degradation route) and probably via the 2-methylcitrate cycle I (propionate degradation route). Catalyzes the reversible isomerization of citrate to isocitrate via cis-aconitate. Catalyzes the hydration of 2-methyl-cis-aconitate to yield (2R,3S)-2-methylisocitrate. The apo form of AcnB functions as a RNA-binding regulatory protein. The protein is Aconitate hydratase B (acnB) of Helicobacter pylori (strain J99 / ATCC 700824) (Campylobacter pylori J99).